We begin with the raw amino-acid sequence, 312 residues long: Acetaldehyde dehydrogenase (312 aa).

12–15 contributes to the NAD(+) binding site; it reads SGNV. Cys-132 acts as the Acyl-thioester intermediate in catalysis. Residues 163-171 and Asn-290 contribute to the NAD(+) site; that span reads SAGPGTRAN.

The protein belongs to the acetaldehyde dehydrogenase family.

The enzyme catalyses acetaldehyde + NAD(+) + CoA = acetyl-CoA + NADH + H(+). This chain is Acetaldehyde dehydrogenase (cbzQ), found in Pseudomonas putida (Arthrobacter siderocapsulatus).